Consider the following 225-residue polypeptide: 7-carboxy-7-deazaguanine synthase (225 aa).

Residues 12-14 and R27 each bind substrate; that span reads IQG. One can recognise a Radical SAM core domain in the interval 18 to 225; it reads YIGVRQLFVR…PQVHKYLGVR (208 aa). [4Fe-4S] cluster is bound by residues C31, C35, and C38. T40 is a Mg(2+) binding site. T80 serves as a coordination point for substrate. G82 lines the S-adenosyl-L-methionine pocket.

This sequence belongs to the radical SAM superfamily. 7-carboxy-7-deazaguanine synthase family. Homodimer. [4Fe-4S] cluster serves as cofactor. S-adenosyl-L-methionine is required as a cofactor. The cofactor is Mg(2+).

It carries out the reaction 6-carboxy-5,6,7,8-tetrahydropterin + H(+) = 7-carboxy-7-deazaguanine + NH4(+). It functions in the pathway purine metabolism; 7-cyano-7-deazaguanine biosynthesis. Catalyzes the complex heterocyclic radical-mediated conversion of 6-carboxy-5,6,7,8-tetrahydropterin (CPH4) to 7-carboxy-7-deazaguanine (CDG), a step common to the biosynthetic pathways of all 7-deazapurine-containing compounds. The protein is 7-carboxy-7-deazaguanine synthase of Archaeoglobus fulgidus (strain ATCC 49558 / DSM 4304 / JCM 9628 / NBRC 100126 / VC-16).